The sequence spans 340 residues: MAGPQDRPRGRGPSSGRPQRPVGGRSQRDRDRRVLGQNFLRDPATIRRIADAADVDPDGLVVEAGPGEGLLTRELARRAGRVRTYELDQRLARRLSTDLAQETSIEVVHADFLTAPHPEEPFQFVGAIPYGITSAIVDWCLTAPTLTSATLVTQQEFARKRTGDYGRWTALTVTTWPTFEWQYVAKVDRTLFTPVPRVHSAIMRLRRRPQPLLRDAAARSRFADMVEIGFVGKGGSLYRSLTREWPRSKVDSAFARADVHHDEIVAFVHPDQWITLFQLLDGSRGGAARGPGDQRGRRGRPGGGPRPDGRAGGGPRRDAGGRRTGDGRGGRPRPPRGGQA.

The segment covering 1–25 has biased composition (low complexity); that stretch reads MAGPQDRPRGRGPSSGRPQRPVGGR. The interval 1–37 is disordered; that stretch reads MAGPQDRPRGRGPSSGRPQRPVGGRSQRDRDRRVLGQ. Positions 38, 40, 65, 86, 111, and 127 each coordinate S-adenosyl-L-methionine. The interval 284–340 is disordered; that stretch reads RGGAARGPGDQRGRRGRPGGGPRPDGRAGGGPRRDAGGRRTGDGRGGRPRPPRGGQA. Residues 301–314 show a composition bias toward gly residues; that stretch reads PGGGPRPDGRAGGG. Positions 315 to 329 are enriched in basic and acidic residues; sequence PRRDAGGRRTGDGRG.

It belongs to the class I-like SAM-binding methyltransferase superfamily. rRNA adenine N(6)-methyltransferase family.

Functionally, involved in erythromycin resistance. This chain is rRNA adenine N-6-methyltransferase (ermA), found in Aeromicrobium erythreum (strain ATCC 51598 / DSM 8599 / JCM 8359 / NBRC 15406 / NRRL B-3381).